The primary structure comprises 347 residues: 4-hydroxyproline 2-epimerase (347 aa).

Position 85 (Gln85) interacts with substrate. Residue Ser93 is the Proton acceptor of the active site. Residues 94–95 (GS) and Asp251 each bind substrate. Cys255 serves as the catalytic Proton donor. 256 to 257 (GT) provides a ligand contact to substrate.

The protein belongs to the proline racemase family.

It catalyses the reaction trans-4-hydroxy-L-proline = cis-4-hydroxy-D-proline. Functionally, catalyzes the epimerization of trans-4-hydroxy-L-proline (t4LHyp) to cis-4-hydroxy-D-proline (c4DHyp). May be involved in a degradation pathway of t4LHyp. Can also catalyze the epimerization of trans-3-hydroxy-L-proline (t3LHyp) to cis-3-hydroxy-D-proline (c3DHyp) in vitro. Displays no proline racemase activity. The protein is 4-hydroxyproline 2-epimerase of Allorhizobium ampelinum (strain ATCC BAA-846 / DSM 112012 / S4) (Agrobacterium vitis (strain S4)).